We begin with the raw amino-acid sequence, 396 residues long: Proton-coupled antiporter flippase LtaA (396 aa).

A run of 12 helical transmembrane segments spans residues 15 to 34 (FILMLIILFLMEFARGMYIL), 46 to 73 (IAVAITSLAFSIHFIADASTNFVIGFLL), 80 to 99 (IVLTTGFILAFTSLFLVIWF), 105 to 126 (VIIFSAMMLGIAVSPIWVIMLS), 138 to 159 (GYVYFSWLLGLLVGMVFMNLLI), 165 to 184 (RFAFMMSLVVLIAWILYYFV), 211 to 231 (LLLFPGILLQGAAIAALVPIL), 243 to 264 (TIEYTVAIIIGGIGCAVSMLFL), 276 to 298 (MYGVILSGFILYMILIFTLSMIV), 304 to 326 (WIIALAIGLMYGILLPAWNTFMA), 338 to 358 (WGVFNSIQGFGSMIGPLFGGL), and 370 to 390 (FYFSALIFLVLAVFYGSYFIA).

It belongs to the major facilitator superfamily. LtaA family.

The protein resides in the cell membrane. Its pathway is cell wall biogenesis; lipoteichoic acid biosynthesis. Its function is as follows. Proton-coupled antiporter flippase that catalyzes the translocation, from the inner to the outer leaflet of the cell membrane, of the lipid-linked disaccharide (anchor-LLD) that anchors lipoteichoic acids (LTA) to the cell membrane. This is Proton-coupled antiporter flippase LtaA (ltaA) from Staphylococcus aureus (strain MRSA252).